An 87-amino-acid chain; its full sequence is Toxin Cll5c (87 aa).

Positions 1 to 19 are cleaved as a signal peptide; the sequence is MNSLLMITACLVLFGTVWA. The LCN-type CS-alpha/beta domain maps to 20-85; that stretch reads KEGYLVNKST…TYPLPNKSCS (66 aa). Cystine bridges form between Cys-31–Cys-84, Cys-35–Cys-60, Cys-44–Cys-65, and Cys-48–Cys-67. Positions 86–87 are cleaved as a propeptide — removed by a carboxypeptidase; the sequence is KK.

This sequence belongs to the long (4 C-C) scorpion toxin superfamily. Sodium channel inhibitor family. Beta subfamily. Expressed by the venom gland.

The protein localises to the secreted. In terms of biological role, beta toxins bind voltage-independently at site-4 of sodium channels (Nav) and shift the voltage of activation toward more negative potentials thereby affecting sodium channel activation and promoting spontaneous and repetitive firing. The chain is Toxin Cll5c from Centruroides limpidus (Mexican scorpion).